Here is a 642-residue protein sequence, read N- to C-terminus: Threonine--tRNA ligase (642 aa).

The TGS domain occupies 1 to 61 (MPVITLPDGS…ETDSELSIIT (61 aa)). Positions 243 to 534 (DHRKIGKQLD…LIEEYAGKFP (292 aa)) are catalytic. Zn(2+) is bound by residues Cys334, His385, and His511.

Belongs to the class-II aminoacyl-tRNA synthetase family. As to quaternary structure, homodimer. It depends on Zn(2+) as a cofactor.

It localises to the cytoplasm. The catalysed reaction is tRNA(Thr) + L-threonine + ATP = L-threonyl-tRNA(Thr) + AMP + diphosphate + H(+). In terms of biological role, catalyzes the attachment of threonine to tRNA(Thr) in a two-step reaction: L-threonine is first activated by ATP to form Thr-AMP and then transferred to the acceptor end of tRNA(Thr). Also edits incorrectly charged L-seryl-tRNA(Thr). This chain is Threonine--tRNA ligase, found in Shewanella halifaxensis (strain HAW-EB4).